Reading from the N-terminus, the 72-residue chain is Translational regulator CsrA (72 aa).

This sequence belongs to the CsrA/RsmA family. Homodimer; the beta-strands of each monomer intercalate to form a hydrophobic core, while the alpha-helices form wings that extend away from the core.

Its subcellular location is the cytoplasm. A translational regulator that binds mRNA to regulate translation initiation and/or mRNA stability. Usually binds in the 5'-UTR at or near the Shine-Dalgarno sequence preventing ribosome-binding, thus repressing translation. Its main target seems to be the major flagellin gene, while its function is anatagonized by FliW. This chain is Translational regulator CsrA, found in Agathobacter rectalis (strain ATCC 33656 / DSM 3377 / JCM 17463 / KCTC 5835 / VPI 0990) (Eubacterium rectale).